Consider the following 663-residue polypeptide: Protein pat-12 (663 aa).

Positions 1–15 (MTSHIATETSVNRWS) are enriched in polar residues. Disordered regions lie at residues 1-78 (MTSH…SGDY), 367-430 (RFEE…GQET), 517-546 (FRRG…DYRR), and 597-663 (PMPA…RRRR). The span at 367–380 (RFEETRRTEEVERR) shows a compositional bias: basic and acidic residues. Positions 381-400 (VQRREKKERRSRHHSSSRHH) are enriched in basic residues. Polar residues predominate over residues 517 to 526 (FRRGSQQQVS). Basic and acidic residues-rich tracts occupy residues 620–640 (FNKE…KPVD) and 649–663 (NYKR…RRRR).

In terms of assembly, interacts with vab-10 (via plankin domain). Isoform a: Expressed in the uterus, the vulva, the rectum, mechanosensory neurons and in head and tail neurons. Isoform e: Expressed in spermatheca and weakly in the vulva. Isoform f: Expressed in spermatheca and weakly in the vulva. Isoform i: Expressed in spermatheca and weakly in the vulva.

Its subcellular location is the apical cell membrane. The protein localises to the basal cell membrane. It localises to the cytoplasm. It is found in the cell junction. The protein resides in the hemidesmosome. Its subcellular location is the cell membrane. The protein localises to the cytoskeleton. Functionally, required for embryonic morphology and development. Plays both a functional and a structural role in the maintenance and probably biogenesis of fibrous organelles, a hemidesomosome-like junction structure, which ensures muscle stability and muscle connection to the external cuticle. In Caenorhabditis elegans, this protein is Protein pat-12.